The following is a 433-amino-acid chain: tRNA (guanine(10)-N(2))-methyltransferase (433 aa).

The protein belongs to the class I-like SAM-binding methyltransferase superfamily. TRM11 methyltransferase family. As to quaternary structure, interacts with TRM112.

It localises to the cytoplasm. It catalyses the reaction guanosine(10) in tRNA + S-adenosyl-L-methionine = N(2)-methylguanosine(10) in tRNA + S-adenosyl-L-homocysteine + H(+). Functionally, catalytic subunit of an S-adenosyl-L-methionine-dependent tRNA methyltransferase complex that mediates the methylation of the guanosine nucleotide at position 10 (m2G10) in tRNAs. This chain is tRNA (guanine(10)-N(2))-methyltransferase (TRM11), found in Saccharomyces cerevisiae (strain ATCC 204508 / S288c) (Baker's yeast).